We begin with the raw amino-acid sequence, 425 residues long: Cysteate synthase (425 aa).

Lysine 106 is subject to N6-(pyridoxal phosphate)lysine. Pyridoxal 5'-phosphate is bound by residues asparagine 132 and threonine 382.

This sequence belongs to the threonine synthase family. Cysteate synthase subfamily. In terms of assembly, homotrimer. It depends on pyridoxal 5'-phosphate as a cofactor.

It catalyses the reaction O-phospho-L-serine + sulfite + H(+) = L-cysteate + phosphate. It participates in cofactor biosynthesis; coenzyme M biosynthesis. Specifically catalyzes the beta-elimination of phosphate from L-phosphoserine and the beta-addition of sulfite to the dehydroalanine intermediate to produce L-cysteate. This Methanosphaerula palustris (strain ATCC BAA-1556 / DSM 19958 / E1-9c) protein is Cysteate synthase.